Here is a 385-residue protein sequence, read N- to C-terminus: Probable protein phosphatase 2C 38 (385 aa).

The PPM-type phosphatase domain maps to 46–357; the sequence is VAGEFSMSVI…DDITVIVVFL (312 aa). Serine 77 is subject to Phosphoserine. Residues aspartate 88, glycine 89, aspartate 289, and aspartate 348 each coordinate Mn(2+).

It belongs to the PP2C family. In terms of assembly, interacts with BIK1. It depends on Mg(2+) as a cofactor. Mn(2+) serves as cofactor. Post-translationally, phosphorylation at Ser-77 induces dissociation of PP2C38 from BIK1.

The protein resides in the cell membrane. The catalysed reaction is O-phospho-L-seryl-[protein] + H2O = L-seryl-[protein] + phosphate. The enzyme catalyses O-phospho-L-threonyl-[protein] + H2O = L-threonyl-[protein] + phosphate. May dephosphorylate and repress plasma membrane H(+)-ATPases (PM H(+)-ATPases, e.g. AHA1 and AHA2), thus influencing negatively plant growth and fitness. Involved in pathogen-associated molecular pattern (PAMP)-triggered immunity (PTI) signaling. Negatively regulates immune responses by controlling the phosphorylation and activation status of BIK1, a central rate-limiting kinase in PTI signaling. Impairs the phosphorylation of the NADPH oxidase RBOHD by BIK1. In Arabidopsis thaliana (Mouse-ear cress), this protein is Probable protein phosphatase 2C 38.